The primary structure comprises 290 residues: 4-hydroxybenzoate octaprenyltransferase (290 aa).

The next 8 membrane-spanning stretches (helical) occupy residues 23–43 (IGAL…TPGV), 46–66 (LWIM…GCVV), 99–119 (LFVV…TMTI), 141–161 (LPQV…FAAV), 163–183 (ESVP…AVAY), 213–233 (LIIG…GELN), 234–254 (GLGW…VYQQ), and 268–288 (AFMN…MSYW).

This sequence belongs to the UbiA prenyltransferase family. Mg(2+) serves as cofactor.

It is found in the cell inner membrane. It carries out the reaction all-trans-octaprenyl diphosphate + 4-hydroxybenzoate = 4-hydroxy-3-(all-trans-octaprenyl)benzoate + diphosphate. Its pathway is cofactor biosynthesis; ubiquinone biosynthesis. Catalyzes the prenylation of para-hydroxybenzoate (PHB) with an all-trans polyprenyl group. Mediates the second step in the final reaction sequence of ubiquinone-8 (UQ-8) biosynthesis, which is the condensation of the polyisoprenoid side chain with PHB, generating the first membrane-bound Q intermediate 3-octaprenyl-4-hydroxybenzoate. This Shigella flexneri protein is 4-hydroxybenzoate octaprenyltransferase.